The primary structure comprises 129 residues: Large ribosomal subunit protein bL19 (129 aa).

This sequence belongs to the bacterial ribosomal protein bL19 family.

In terms of biological role, this protein is located at the 30S-50S ribosomal subunit interface and may play a role in the structure and function of the aminoacyl-tRNA binding site. In Rhizorhabdus wittichii (strain DSM 6014 / CCUG 31198 / JCM 15750 / NBRC 105917 / EY 4224 / RW1) (Sphingomonas wittichii), this protein is Large ribosomal subunit protein bL19.